A 974-amino-acid chain; its full sequence is Phosphoenolpyruvate carboxylase 1 (974 aa).

Active-site residues include His-164 and Lys-604.

This sequence belongs to the PEPCase type 1 family. Exists as a homotetramer or heterooligomer. Mg(2+) is required as a cofactor.

It localises to the cytoplasm. It carries out the reaction oxaloacetate + phosphate = phosphoenolpyruvate + hydrogencarbonate. Its activity is regulated as follows. Activated by glutamine and dihydroxyacetone phosphate. Inhibited by glutamate, aspartate, 2-oxoglutarate and malate. Through the carboxylation of phosphoenolpyruvate (PEP) it forms oxaloacetate, a four-carbon dicarboxylic acid source for the tricarboxylic acid cycle. The sequence is that of Phosphoenolpyruvate carboxylase 1 from Chlamydomonas reinhardtii (Chlamydomonas smithii).